Here is a 217-residue protein sequence, read N- to C-terminus: MSWTCPRCQQPVFFAEKVSSLGKNWHRFCLKCERCHSILSPGGHAEHNGRPYCHKPCYGALFGPRGVNIGGVGSYLYNPPTPSPGCTTPLSPSSFSPPRPRTGLPQGKKSPPHMKTFTGETSLCPGCGEPVYFAEKVMSLGRNWHRPCLRCQRCHKTLTAGSHAEHDGVPYCHVPCYGYLFGPKGGQPHPRHWDGMYMPEVWHVHGLWVCVDNFPCG.

The LIM zinc-binding 1 domain maps to 3 to 64 (WTCPRCQQPV…KPCYGALFGP (62 aa)). A disordered region spans residues 84-112 (PGCTTPLSPSSFSPPRPRTGLPQGKKSPP). The LIM zinc-binding 2 domain occupies 122-183 (SLCPGCGEPV…VPCYGYLFGP (62 aa)).

Expressed in most tissues, but not in skeletal muscle.

It localises to the cytoplasm. This is Cysteine-rich protein 3 (CRIP3) from Homo sapiens (Human).